We begin with the raw amino-acid sequence, 574 residues long: ESX-1 secretion system protein EccA1 (574 aa).

ATP is bound at residue 335-342 (GPPGTGKT).

It belongs to the CbxX/CfxQ family. Part of the ESX-1 / type VII secretion system (T7SS), which is composed of cytosolic and membrane components.

It localises to the cytoplasm. Functionally, part of the ESX-1 / type VII specialized secretion system (T7SS), which exports several proteins including EsxA and EsxB. Plays a role in DNA conjugation, in both donor and recipient strains. EccA1 exhibits ATPase activity and may provide energy for the export of ESX-1 substrates. The protein is ESX-1 secretion system protein EccA1 of Mycolicibacterium smegmatis (strain ATCC 700084 / mc(2)155) (Mycobacterium smegmatis).